Here is a 1037-residue protein sequence, read N- to C-terminus: Probable inorganic carbon transporter subunit DabA 2 (1037 aa).

Cys460, Asp462, His719, and Cys734 together coordinate Zn(2+).

It belongs to the inorganic carbon transporter (TC 9.A.2) DabA family. Forms a complex with DabB. Zn(2+) serves as cofactor.

Its subcellular location is the cell inner membrane. Its function is as follows. Part of an energy-coupled inorganic carbon pump. In Nitrobacter winogradskyi (strain ATCC 25391 / DSM 10237 / CIP 104748 / NCIMB 11846 / Nb-255), this protein is Probable inorganic carbon transporter subunit DabA 2.